We begin with the raw amino-acid sequence, 340 residues long: Glycerol-3-phosphate dehydrogenase [NAD(P)+] (340 aa).

NADPH-binding residues include Ser-14, Phe-15, Arg-35, and Lys-108. The sn-glycerol 3-phosphate site is built by Lys-108 and Gly-136. Ala-140 is an NADPH binding site. Positions 191, 244, 254, 255, and 256 each coordinate sn-glycerol 3-phosphate. Lys-191 serves as the catalytic Proton acceptor. Residue Arg-255 participates in NADPH binding. Glu-281 serves as a coordination point for NADPH.

Belongs to the NAD-dependent glycerol-3-phosphate dehydrogenase family.

Its subcellular location is the cytoplasm. The enzyme catalyses sn-glycerol 3-phosphate + NAD(+) = dihydroxyacetone phosphate + NADH + H(+). The catalysed reaction is sn-glycerol 3-phosphate + NADP(+) = dihydroxyacetone phosphate + NADPH + H(+). It participates in membrane lipid metabolism; glycerophospholipid metabolism. Its function is as follows. Catalyzes the reduction of the glycolytic intermediate dihydroxyacetone phosphate (DHAP) to sn-glycerol 3-phosphate (G3P), the key precursor for phospholipid synthesis. This chain is Glycerol-3-phosphate dehydrogenase [NAD(P)+], found in Pseudomonas aeruginosa (strain ATCC 15692 / DSM 22644 / CIP 104116 / JCM 14847 / LMG 12228 / 1C / PRS 101 / PAO1).